A 417-amino-acid polypeptide reads, in one-letter code: MASSKLREPVDEVFDLDLAVPETTRLDSSLHKARAQLLAKGRRHRPSRSRLRDSASSAEDGEGSDGPGGKVTDGCGSPLHRLRSPLHSGPGSPASGSFCLEPPGLRRSLDEDEPPPSPLARYRPLHNAASHEGLAATSGSPPRSAPSSDSSPSFVRRYPRAEPHSEDDSRDASPPEPASPTIGLDKKTRRKFLDLGVTLRRASTSRSRKEKGSNRLSMGSRESVEGSGRTGSSPFLPFSWFTDSGKGSASSGSTTSPTCSPKHEGFSPKKSASQESTLSDDSTPPSSSPKIPGGPRQETKCSYPYHTLSQSSDEFLDESLPAVQHWTSQQVGQWLHSLNLEQYAAEFAARQVDGPQLLQLDGSKLKSLGLSNSHDRALVKRKLKELAAAAEKERKAQEKTAKQREKLRRRENDAKKS.

The tract at residues Q36–S302 is disordered. Residues K40 to S49 are compositionally biased toward basic residues. Phosphoserine occurs at positions 84 and 108. A compositionally biased stretch (low complexity) spans S138 to S153. The span at P159 to S173 shows a compositional bias: basic and acidic residues. Residues S173 and S179 each carry the phosphoserine modification. Low complexity-rich tracts occupy residues S244–S260 and S276–P289. S279 is modified (phosphoserine). T283 carries the phosphothreonine modification. Residues W326–A389 enclose the SAM domain. Residues D375 to K416 are a coiled coil. Positions A390–S417 are disordered.

This Mus musculus (Mouse) protein is Sterile alpha motif domain-containing protein 14 (Samd14).